Consider the following 126-residue polypeptide: MILGVGTDIVYIPRISNLWKKFGIKFLTRVFNQKEIEDSYKYTNFDAQVRHFAKRFAAKEAYVKALGTGFGQSIKMSDIVILNNPYGKPQITVSNSNPIHKIELSISDEKDYAIAFIVIYNANIKL.

Mg(2+) is bound by residues Asp-8 and Glu-60.

Belongs to the P-Pant transferase superfamily. AcpS family. The cofactor is Mg(2+).

It localises to the cytoplasm. It carries out the reaction apo-[ACP] + CoA = holo-[ACP] + adenosine 3',5'-bisphosphate + H(+). Functionally, transfers the 4'-phosphopantetheine moiety from coenzyme A to a Ser of acyl-carrier-protein. This is Holo-[acyl-carrier-protein] synthase from Ehrlichia canis (strain Jake).